Reading from the N-terminus, the 479-residue chain is Adenosylhomocysteinase (479 aa).

Substrate-binding residues include Thr-66, Asp-142, and Glu-203. Thr-204 to Thr-206 contributes to the NAD(+) binding site. 2 residues coordinate substrate: Lys-233 and Asp-237. NAD(+) contacts are provided by residues Asn-238, Gly-267–Gly-272, Glu-290, Asn-325, Ile-346–His-348, and Asn-394.

The protein belongs to the adenosylhomocysteinase family. NAD(+) is required as a cofactor.

Its subcellular location is the cytoplasm. It catalyses the reaction S-adenosyl-L-homocysteine + H2O = L-homocysteine + adenosine. It participates in amino-acid biosynthesis; L-homocysteine biosynthesis; L-homocysteine from S-adenosyl-L-homocysteine: step 1/1. Its function is as follows. May play a key role in the regulation of the intracellular concentration of adenosylhomocysteine. This is Adenosylhomocysteinase from Nitratidesulfovibrio vulgaris (strain ATCC 29579 / DSM 644 / CCUG 34227 / NCIMB 8303 / VKM B-1760 / Hildenborough) (Desulfovibrio vulgaris).